Here is a 265-residue protein sequence, read N- to C-terminus: MQPDLHCRTLAAHTLKHFRALSPLTHCMTNDVVQTFTANTLLALGASPAMVIDPVEARPFAAIANALLVNVGTLTASRADAMRGAVESAYDAKTPWTLDPVAVGALEFRRRFCLDLLSLRPAAIRGNASEILALSGMALGGRGVDTTEAALAALPAAQALARQIDCIVVVTGEVDYVTNGQRTLSIPGGDPLMTRIVGTGCALSAVVAASCALPGAALDNVASACCWMKLAGQAAAERSEGPGSFIPAFLDALYHLDVEAANATN.

Met50 lines the substrate pocket. ATP is bound by residues Arg125 and Thr171. A substrate-binding site is contributed by Gly198.

It belongs to the Thz kinase family. Mg(2+) is required as a cofactor.

The enzyme catalyses 5-(2-hydroxyethyl)-4-methylthiazole + ATP = 4-methyl-5-(2-phosphooxyethyl)-thiazole + ADP + H(+). It participates in cofactor biosynthesis; thiamine diphosphate biosynthesis; 4-methyl-5-(2-phosphoethyl)-thiazole from 5-(2-hydroxyethyl)-4-methylthiazole: step 1/1. In terms of biological role, catalyzes the phosphorylation of the hydroxyl group of 4-methyl-5-beta-hydroxyethylthiazole (THZ). The sequence is that of Hydroxyethylthiazole kinase from Salmonella agona (strain SL483).